Reading from the N-terminus, the 380-residue chain is Crotonobetainyl-CoA reductase (380 aa).

The protein belongs to the acyl-CoA dehydrogenase family. Homotetramer. It depends on FAD as a cofactor.

Its subcellular location is the cytoplasm. The catalysed reaction is 4-(trimethylamino)butanoyl-CoA + oxidized [electron-transfer flavoprotein] + H(+) = crotonobetainyl-CoA + reduced [electron-transfer flavoprotein]. It functions in the pathway amine and polyamine metabolism; carnitine metabolism. In terms of biological role, catalyzes the reduction of crotonobetainyl-CoA to gamma-butyrobetainyl-CoA. The chain is Crotonobetainyl-CoA reductase from Salmonella arizonae (strain ATCC BAA-731 / CDC346-86 / RSK2980).